Reading from the N-terminus, the 129-residue chain is Protein Turandot C (129 aa).

The first 21 residues, 1–21 (MNASISLLCLALLLISPFCLG), serve as a signal peptide directing secretion.

The protein belongs to the Turandot family.

Its subcellular location is the secreted. In terms of biological role, a humoral factor that may play a role in stress tolerance. This chain is Protein Turandot C, found in Drosophila melanogaster (Fruit fly).